Reading from the N-terminus, the 525-residue chain is Glutamate--cysteine ligase (525 aa).

Belongs to the glutamate--cysteine ligase type 1 family. Type 1 subfamily.

It catalyses the reaction L-cysteine + L-glutamate + ATP = gamma-L-glutamyl-L-cysteine + ADP + phosphate + H(+). The protein operates within sulfur metabolism; glutathione biosynthesis; glutathione from L-cysteine and L-glutamate: step 1/2. The protein is Glutamate--cysteine ligase of Pseudomonas putida (strain ATCC 47054 / DSM 6125 / CFBP 8728 / NCIMB 11950 / KT2440).